A 124-amino-acid polypeptide reads, in one-letter code: Suppressor of RNA silencing (124 aa).

The tract at residues 1–14 (MPKSEFFREERKRR) is basic motif (BM). Residues 30 to 68 (CGYSCGMPPAVEKVSVPADTEEDVYMLIFPYEQFCGEKH) form a C-2 region. The stretch at 72–124 (YESLKDVSDDELKLRRLERQRETLLASFQQKLKRYDEKIALLSEKFKNLRSKL) forms a coiled coil. At Ser-79 the chain carries Phosphoserine.

Belongs to the virgaviridae suppressor of RNA silencing family. As to quaternary structure, homooligomer. Phosphorylated at Ser-79 by a host PKA-like kinase; the phosphorylation at this site seems to suppress host cell death.

Its subcellular location is the host chloroplast envelope. It localises to the host endoplasmic reticulum. The protein localises to the host cell junction. It is found in the host plasmodesma. Suppressor of RNA-mediated gene silencing, also known as post-transcriptional gene silencing (PTGS), a mechanism of plant viral defense that limits the accumulation of viral RNAs. Promotes viral cell-to-cell long distance movement. In Peanut clump virus (isolate 87/TGTA2) (PCV), this protein is Suppressor of RNA silencing.